The primary structure comprises 444 residues: Spermidine/putrescine import ATP-binding protein PotA (444 aa).

The region spanning 11-332 (ISLVDVDKEF…PVNKWVANFI (322 aa)) is the ABC transporter domain. An ATP-binding site is contributed by 43-50 (GPSGSGKT). Positions 111–201 (RIKKKAEEIP…ESFKKKYLTR (91 aa)) are insert.

The protein belongs to the ABC transporter superfamily. Spermidine/putrescine importer (TC 3.A.1.11.1) family. The complex is composed of two ATP-binding proteins (PotA), two transmembrane proteins (PotB and PotC) and a solute-binding protein (PotD).

It is found in the cell membrane. It carries out the reaction ATP + H2O + polyamine-[polyamine-binding protein]Side 1 = ADP + phosphate + polyamineSide 2 + [polyamine-binding protein]Side 1.. In terms of biological role, part of the ABC transporter complex PotABCD involved in spermidine/putrescine import. Responsible for energy coupling to the transport system. This is Spermidine/putrescine import ATP-binding protein PotA from Mesomycoplasma hyopneumoniae (strain J / ATCC 25934 / NCTC 10110) (Mycoplasma hyopneumoniae).